The chain runs to 311 residues: Protease HtpX homolog 1 (311 aa).

The next 2 helical transmembrane spans lie at 12–32 and 35–55; these read VISL…IASL and ISLF…WIIS. H137 is a Zn(2+) binding site. Residue E138 is part of the active site. Residue H141 participates in Zn(2+) binding. 2 helical membrane-spanning segments follow: residues 159-179 and 184-204; these read VLGY…FLAA and LLFA…TFIL. Position 216 (E216) interacts with Zn(2+).

The protein belongs to the peptidase M48B family. Zn(2+) serves as cofactor.

The protein resides in the cell membrane. The protein is Protease HtpX homolog 1 of Saccharolobus solfataricus (strain ATCC 35092 / DSM 1617 / JCM 11322 / P2) (Sulfolobus solfataricus).